The following is a 274-amino-acid chain: Diaminopimelate epimerase (274 aa).

3 residues coordinate substrate: Asn-11, Gln-44, and Asn-64. Cys-73 acts as the Proton donor in catalysis. Residues Gly-74–Asn-75, Asn-157, Asn-190, and Glu-208–Arg-209 contribute to the substrate site. Cys-217 functions as the Proton acceptor in the catalytic mechanism. Residue Gly-218–Ser-219 participates in substrate binding.

This sequence belongs to the diaminopimelate epimerase family. In terms of assembly, homodimer.

It is found in the cytoplasm. It carries out the reaction (2S,6S)-2,6-diaminopimelate = meso-2,6-diaminopimelate. It functions in the pathway amino-acid biosynthesis; L-lysine biosynthesis via DAP pathway; DL-2,6-diaminopimelate from LL-2,6-diaminopimelate: step 1/1. Functionally, catalyzes the stereoinversion of LL-2,6-diaminopimelate (L,L-DAP) to meso-diaminopimelate (meso-DAP), a precursor of L-lysine and an essential component of the bacterial peptidoglycan. The protein is Diaminopimelate epimerase of Shigella flexneri serotype 5b (strain 8401).